We begin with the raw amino-acid sequence, 83 residues long: Large ribosomal subunit protein eL43 (83 aa).

Zn(2+) contacts are provided by Cys38, Cys41, Cys56, and Cys59. Residues 38–59 (CPVCGRRAVRRISTGIWQCKKC) form a C4-type zinc finger.

This sequence belongs to the eukaryotic ribosomal protein eL43 family. Putative zinc-binding subfamily. As to quaternary structure, part of the 50S ribosomal subunit. Requires Zn(2+) as cofactor.

Functionally, binds to the 23S rRNA. This Pyrococcus abyssi (strain GE5 / Orsay) protein is Large ribosomal subunit protein eL43.